Consider the following 121-residue polypeptide: MNVVAIIMASQETCSGRAPRETPEWRRPACLVASILVRALEFSWLFSTCLLVAFDFARDCGLPPHSGKTWSDGKGPAALSFGKTNTKEATTNFYNRLDEKSGEEQAEKRKENSRSWIIYLL.

77–84 (AALSFGKT) contributes to the ATP binding site.

This is an uncharacterized protein from Saccharomyces cerevisiae (strain ATCC 204508 / S288c) (Baker's yeast).